We begin with the raw amino-acid sequence, 77 residues long: Translation initiation factor IF-1, chloroplastic (77 aa).

The S1-like domain occupies 1–71 (MKEQKLIHEG…TRGRIIYRLR (71 aa)).

It belongs to the IF-1 family. In terms of assembly, component of the 30S ribosomal translation pre-initiation complex which assembles on the 30S ribosome in the order IF-2 and IF-3, IF-1 and N-formylmethionyl-tRNA(fMet); mRNA recruitment can occur at any time during PIC assembly.

The protein resides in the plastid. Its subcellular location is the chloroplast. Its function is as follows. One of the essential components for the initiation of protein synthesis. Stabilizes the binding of IF-2 and IF-3 on the 30S subunit to which N-formylmethionyl-tRNA(fMet) subsequently binds. Helps modulate mRNA selection, yielding the 30S pre-initiation complex (PIC). Upon addition of the 50S ribosomal subunit IF-1, IF-2 and IF-3 are released leaving the mature 70S translation initiation complex. In Phalaenopsis aphrodite subsp. formosana (Moth orchid), this protein is Translation initiation factor IF-1, chloroplastic.